The following is a 239-amino-acid chain: ATP synthase subunit a (239 aa).

6 consecutive transmembrane segments (helical) span residues 31-51 (FLLQPHVTYTWVVMLVLLGLG), 91-111 (VFPLIASLGMFILFSNYLGMI), 125-145 (AACALISVVFTHVIGIKFHGV), 151-171 (FMGPVWWLTPLIMPIEIIGHI), 194-214 (ILFFLAGFYLAPLPMMFLGLF), and 215-235 (TGFIQAFIFCLLSMMYFAGAI).

This sequence belongs to the ATPase A chain family. As to quaternary structure, F-type ATPases have 2 components, CF(1) - the catalytic core - and CF(0) - the membrane proton channel. CF(1) has five subunits: alpha(3), beta(3), gamma(1), delta(1), epsilon(1). CF(0) has three main subunits: a(1), b(2) and c(9-12). The alpha and beta chains form an alternating ring which encloses part of the gamma chain. CF(1) is attached to CF(0) by a central stalk formed by the gamma and epsilon chains, while a peripheral stalk is formed by the delta and b chains.

It is found in the cell inner membrane. In terms of biological role, key component of the proton channel; it plays a direct role in the translocation of protons across the membrane. The chain is ATP synthase subunit a from Syntrophobacter fumaroxidans (strain DSM 10017 / MPOB).